Here is a 230-residue protein sequence, read N- to C-terminus: Small ribosomal subunit protein uS3 (230 aa).

The 69-residue stretch at 39 to 107 folds into the KH type-2 domain; it reads VRNYLRQKLA…PIHVNIEEIR (69 aa). A disordered region spans residues 210 to 230; sequence SSKPEHESKQRKAGRRNAAAN.

The protein belongs to the universal ribosomal protein uS3 family. As to quaternary structure, part of the 30S ribosomal subunit. Forms a tight complex with proteins S10 and S14.

Functionally, binds the lower part of the 30S subunit head. Binds mRNA in the 70S ribosome, positioning it for translation. The chain is Small ribosomal subunit protein uS3 from Neisseria gonorrhoeae (strain ATCC 700825 / FA 1090).